We begin with the raw amino-acid sequence, 359 residues long: Peptide chain release factor 1 (359 aa).

The residue at position 236 (Gln236) is an N5-methylglutamine.

Belongs to the prokaryotic/mitochondrial release factor family. Methylated by PrmC. Methylation increases the termination efficiency of RF1.

Its subcellular location is the cytoplasm. Functionally, peptide chain release factor 1 directs the termination of translation in response to the peptide chain termination codons UAG and UAA. The protein is Peptide chain release factor 1 (prfA) of Mycoplasma pneumoniae (strain ATCC 29342 / M129 / Subtype 1) (Mycoplasmoides pneumoniae).